The sequence spans 156 residues: Inner membrane protein YlaC (156 aa).

Topologically, residues 1–35 (MTEIQRLLTETIESLNTREKRDNKPRFSISFIRKH) are cytoplasmic. Residues 36-56 (PGLFIGMYVAFFATLAVMLQS) traverse the membrane as a helical segment. Residues 57 to 58 (ET) lie on the Periplasmic side of the membrane. The chain crosses the membrane as a helical span at residues 59 to 79 (LSGSVWLLVVLFILLNGFFFF). Over 80-156 (DVYPRYRYED…FTLARAESTS (77 aa)) the chain is Cytoplasmic.

It localises to the cell inner membrane. This chain is Inner membrane protein YlaC (ylaC), found in Escherichia coli (strain K12).